A 252-amino-acid polypeptide reads, in one-letter code: Pyrroloquinoline-quinone synthase (252 aa).

Belongs to the PqqC family.

It catalyses the reaction 6-(2-amino-2-carboxyethyl)-7,8-dioxo-1,2,3,4,7,8-hexahydroquinoline-2,4-dicarboxylate + 3 O2 = pyrroloquinoline quinone + 2 H2O2 + 2 H2O + H(+). The protein operates within cofactor biosynthesis; pyrroloquinoline quinone biosynthesis. Its function is as follows. Ring cyclization and eight-electron oxidation of 3a-(2-amino-2-carboxyethyl)-4,5-dioxo-4,5,6,7,8,9-hexahydroquinoline-7,9-dicarboxylic-acid to PQQ. The polypeptide is Pyrroloquinoline-quinone synthase (Acinetobacter baumannii (strain AB307-0294)).